The chain runs to 181 residues: Large ribosomal subunit protein uL16 (181 aa).

This sequence belongs to the universal ribosomal protein uL16 family. As to quaternary structure, part of the 50S ribosomal subunit.

This chain is Large ribosomal subunit protein uL16, found in Pyrococcus furiosus (strain ATCC 43587 / DSM 3638 / JCM 8422 / Vc1).